The following is a 507-amino-acid chain: Phosphoprotein (507 aa).

Phosphoserine occurs at positions 86 and 151. Residues 137-160 (DGVEVWGGDEESENSDVDSGEPDP) are compositionally biased toward acidic residues. The disordered stretch occupies residues 137–307 (DGVEVWGGDE…QSNIEPEDDY (171 aa)). Basic and acidic residues-rich tracts occupy residues 189–199 (EIQKLLEDQSR) and 222–233 (TASEKPIKKGTD). Composition is skewed to low complexity over residues 236–252 (STSSGTMAESSSTGGAT) and 266–278 (NASAENALASASN). Residues 279–301 (VSPTQGSKTESGTTTSRISQSNI) are compositionally biased toward polar residues. Positions 304–376 (EDDYDDELFS…LSSVMIAIPG (73 aa)) are multimerization. Residues 459–507 (ASRSVIRSIIKSSHLGEDRKDYLMSLLNDIQGSKDLAQFHQMLVKILKN) are interaction with the nucleocapsid (N-RNA).

This sequence belongs to the morbillivirus P protein family. Homotetramer. Interacts (via multimerization domain) with polymerase L; this interaction forms the polymerase L-P complex. Interacts (via N-terminus) with N0 (via Ncore); this interaction allows P to chaperon N0 to avoid N polymerization before encapsidation. Interacts (via C-terminus) with N-RNA template; this interaction positions the polymerase on the template for both transcription and replication. In terms of processing, phosphorylation on serines by host CK2 is necessary for the formation of viral factories.

Its function is as follows. Essential cofactor of the RNA polymerase L that plays a central role in the transcription and replication by forming the polymerase complex with RNA polymerase L and recruiting L to the genomic N-RNA template for RNA synthesis. Also plays a central role in the encapsidation of nascent RNA chains by forming the encapsidation complex with the nucleocapsid protein N (N-P complex). Acts as a chaperone for newly synthesized free N protein, so-called N0, allowing encapsidation of nascent RNA chains during replication. The nucleoprotein protein N prevents excessive phosphorylation of P, which leads to down-regulation of viral transcription/ replication. Participates, together with N, in the formation of viral factories (viroplasms), which are large inclusions in the host cytoplasm where replication takes place. The polypeptide is Phosphoprotein (P/V) (Bos indicus (Zebu)).